A 347-amino-acid polypeptide reads, in one-letter code: NADH-ubiquinone oxidoreductase chain 2 (347 aa).

The next 10 helical transmembrane spans lie at Pro-3–Ser-23, Tyr-59–Leu-79, Pro-95–Val-115, Gly-127–Pro-147, Ile-149–Gly-169, Ile-178–Pro-198, Thr-200–Met-220, Val-241–Ile-261, Gly-274–Met-294, and Leu-325–Val-345.

Belongs to the complex I subunit 2 family. As to quaternary structure, core subunit of respiratory chain NADH dehydrogenase (Complex I) which is composed of 45 different subunits. Interacts with TMEM242.

Its subcellular location is the mitochondrion inner membrane. The catalysed reaction is a ubiquinone + NADH + 5 H(+)(in) = a ubiquinol + NAD(+) + 4 H(+)(out). Core subunit of the mitochondrial membrane respiratory chain NADH dehydrogenase (Complex I) which catalyzes electron transfer from NADH through the respiratory chain, using ubiquinone as an electron acceptor. Essential for the catalytic activity and assembly of complex I. The sequence is that of NADH-ubiquinone oxidoreductase chain 2 from Oryctolagus cuniculus (Rabbit).